Consider the following 329-residue polypeptide: Beta-ketoacyl-[acyl-carrier-protein] synthase III (329 aa).

Residues Cys113 and His255 contribute to the active site. Residues 256 to 260 form an ACP-binding region; the sequence is QANQR. Residue Asn285 is part of the active site.

It belongs to the thiolase-like superfamily. FabH family. Homodimer.

The protein localises to the cytoplasm. The enzyme catalyses malonyl-[ACP] + acetyl-CoA + H(+) = 3-oxobutanoyl-[ACP] + CO2 + CoA. Its pathway is lipid metabolism; fatty acid biosynthesis. In terms of biological role, catalyzes the condensation reaction of fatty acid synthesis by the addition to an acyl acceptor of two carbons from malonyl-ACP. Catalyzes the first condensation reaction which initiates fatty acid synthesis and may therefore play a role in governing the total rate of fatty acid production. Possesses both acetoacetyl-ACP synthase and acetyl transacylase activities. Its substrate specificity determines the biosynthesis of branched-chain and/or straight-chain of fatty acids. The sequence is that of Beta-ketoacyl-[acyl-carrier-protein] synthase III from Chlorobium chlorochromatii (strain CaD3).